We begin with the raw amino-acid sequence, 117 residues long: Small nuclear ribonucleoprotein Sm D1 (117 aa).

A Sm domain is found at 2 to 74 (KLVRFLMKLT…IRYYILPDSL (73 aa)). The segment at 81–117 (IDDSTKPKQKKKEVVRGRGRGRGRGTRGRGRGASRGF) is disordered. A compositionally biased stretch (basic residues) spans 87-117 (PKQKKKEVVRGRGRGRGRGTRGRGRGASRGF).

The protein belongs to the snRNP core protein family. As to quaternary structure, belongs to the 40S cdc5-associated complex (or cwf complex), a spliceosome sub-complex reminiscent of a late-stage spliceosome composed of the U2, U5 and U6 snRNAs and at least brr2, cdc5, cwf2/prp3, cwf3/syf1, cwf4/syf3, cwf5/ecm2, spp42/cwf6, cwf7/spf27, cwf8, cwf9, cwf10, cwf11, cwf12, prp45/cwf13, cwf14, cwf15, cwf16, cwf17, cwf18, cwf19, cwf20, cwf21, cwf22, cwf23, cwf24, cwf25, cwf26, cyp7/cwf27, cwf28, cwf29/ist3, lea1, msl1, prp5/cwf1, prp10, prp12/sap130, prp17, prp22, sap61, sap62, sap114, sap145, slu7, smb1, smd1, smd3, smf1, smg1 and syf2. Interacts with saf5; the interaction is direct.

The protein localises to the nucleus. Its subcellular location is the cytoplasm. Plays a role in pre-mRNA splicing as a core component of the spliceosomal U1, U2, U4 and U5 small nuclear ribonucleoproteins (snRNPs), the building blocks of the spliceosome. The chain is Small nuclear ribonucleoprotein Sm D1 (smd1) from Schizosaccharomyces pombe (strain 972 / ATCC 24843) (Fission yeast).